Reading from the N-terminus, the 648-residue chain is Acetyl-coenzyme A synthetase (648 aa).

CoA-binding positions include 191 to 194, threonine 310, and asparagine 334; that span reads RGGR. Residues 386–388, 410–415, aspartate 499, and arginine 514 each bind ATP; these read GEP and DTWWQT. Serine 522 lines the CoA pocket. Arginine 525 is an ATP binding site. Mg(2+)-binding residues include valine 536, histidine 538, and isoleucine 541. A CoA-binding site is contributed by arginine 583. The residue at position 608 (lysine 608) is an N6-acetyllysine.

This sequence belongs to the ATP-dependent AMP-binding enzyme family. Mg(2+) serves as cofactor. In terms of processing, acetylated. Deacetylation by the SIR2-homolog deacetylase activates the enzyme.

The catalysed reaction is acetate + ATP + CoA = acetyl-CoA + AMP + diphosphate. Functionally, catalyzes the conversion of acetate into acetyl-CoA (AcCoA), an essential intermediate at the junction of anabolic and catabolic pathways. AcsA undergoes a two-step reaction. In the first half reaction, AcsA combines acetate with ATP to form acetyl-adenylate (AcAMP) intermediate. In the second half reaction, it can then transfer the acetyl group from AcAMP to the sulfhydryl group of CoA, forming the product AcCoA. The chain is Acetyl-coenzyme A synthetase from Aeromonas salmonicida (strain A449).